We begin with the raw amino-acid sequence, 465 residues long: Cysteine--tRNA ligase (465 aa).

A Zn(2+)-binding site is contributed by Cys-27. The 'HIGH' region motif lies at 29 to 39; that stretch reads PTVYNFFHIGN. Residues Cys-207, His-232, and Glu-236 each coordinate Zn(2+). Residues 264-268 carry the 'KMSKS' region motif; it reads KMSKS. Lys-267 is an ATP binding site.

It belongs to the class-I aminoacyl-tRNA synthetase family. As to quaternary structure, monomer. Requires Zn(2+) as cofactor.

The protein resides in the cytoplasm. The catalysed reaction is tRNA(Cys) + L-cysteine + ATP = L-cysteinyl-tRNA(Cys) + AMP + diphosphate. This chain is Cysteine--tRNA ligase, found in Clostridium botulinum (strain ATCC 19397 / Type A).